Consider the following 333-residue polypeptide: Cilia- and flagella-associated protein 119 (333 aa).

The span at 1 to 10 shows a compositional bias: polar residues; the sequence is MITPSSSQSL. Disordered stretches follow at residues 1–70 and 309–333; these read MITP…ANLF and RLSSKLAALEQPFQTPPSKGKTKTK. Position 34 is a phosphoserine (Ser34). The span at 44 to 58 shows a compositional bias: polar residues; the sequence is TDMQTESPAEATSSP. The stretch at 284–319 forms a coiled coil; that stretch reads IKSQLSKELRQLQQLVEERLKESEERLSSKLAALEQ.

Its subcellular location is the cell projection. The protein resides in the cilium. The protein localises to the flagellum. It is found in the cytoplasmic vesicle. It localises to the secretory vesicle. Its subcellular location is the acrosome. The protein resides in the cytoplasm. The protein is Cilia- and flagella-associated protein 119 of Mus musculus (Mouse).